A 477-amino-acid polypeptide reads, in one-letter code: ATP synthase subunit beta (477 aa).

148 to 155 (GGAGVGKT) contributes to the ATP binding site.

The protein belongs to the ATPase alpha/beta chains family. F-type ATPases have 2 components, CF(1) - the catalytic core - and CF(0) - the membrane proton channel. CF(1) has five subunits: alpha(3), beta(3), gamma(1), delta(1), epsilon(1). CF(0) has three main subunits: a(1), b(2) and c(9-12). The alpha and beta chains form an alternating ring which encloses part of the gamma chain. CF(1) is attached to CF(0) by a central stalk formed by the gamma and epsilon chains, while a peripheral stalk is formed by the delta and b chains.

It localises to the cell inner membrane. It carries out the reaction ATP + H2O + 4 H(+)(in) = ADP + phosphate + 5 H(+)(out). Its function is as follows. Produces ATP from ADP in the presence of a proton gradient across the membrane. The catalytic sites are hosted primarily by the beta subunits. The protein is ATP synthase subunit beta of Psychrobacter cryohalolentis (strain ATCC BAA-1226 / DSM 17306 / VKM B-2378 / K5).